We begin with the raw amino-acid sequence, 591 residues long: L-fucose isomerase (591 aa).

Residues E337 and D361 each act as proton acceptor in the active site. Residues E337, D361, and H528 each coordinate Mn(2+).

This sequence belongs to the L-fucose isomerase family. In terms of assembly, homohexamer. It depends on Mn(2+) as a cofactor.

The protein resides in the cytoplasm. It carries out the reaction L-fucose = L-fuculose. It participates in carbohydrate degradation; L-fucose degradation; L-lactaldehyde and glycerone phosphate from L-fucose: step 1/3. Its function is as follows. Converts the aldose L-fucose into the corresponding ketose L-fuculose. This Salmonella choleraesuis (strain SC-B67) protein is L-fucose isomerase.